Here is a 598-residue protein sequence, read N- to C-terminus: MTKRRNLFMVGSSFTIDHLPPEIWLCISKLVGTSDLHNLCLINRRLYLTITSDEIWKRRCYDRWINRESLDILTGNDYDSIPVSQWYSYYLRRAKWENKIFCLLWGLTEETNPQHFREKYLHILQFRHYKLATFLHRIIKQGYIPDKRPLDLITYANYLLKNVRHKYVFPLFYPTNAAELKNLNNMASRDAEMIYLRLSAIDTSFDDLLDAREFILNGICSDLLQKYKKIEEFLKLRPVTRVSKLISISTDYLDCFTQPHDSVGQTNDRATGRELHREDFMLLRVYSREGRGYKTIILAIIQAITKRYNVDSYLARDHLVVSEPDFPDGRAFVTVNEDFQPYIFDKEDLLSVWSNNFHNAENFESTVLPALLEPISIQHLLTEFFRELLRCKPRPFEGYPNRAHGLRDMFPYGKVEVPRDVTMYFAFIYDLFDGMFESGMTSLRGQMLRDLLNYVNANNFGDLNIIIGQNALKEPNDCWSNKRDYVLLDDNNKIGYFYTDIETEDTLCALNQYEVDGKVFITTIDILGDIRVRLAEGLTPFQGDNDKLWESFSSVVPRTDWGLFFKGYDKERRRMQLNPYIEEKLSNLANDEQPLHNL.

Positions 13-59 (SFTIDHLPPEIWLCISKLVGTSDLHNLCLINRRLYLTITSDEIWKRR) constitute an F-box domain.

Interacts with SKP1. Component of the probable SCF(MDM30) complex containing CDC53, SKP1, RBX1 and MDM30. Interacts with SKP1 and FZO1.

It localises to the cytoplasm. It is found in the mitochondrion. Its pathway is protein modification; protein ubiquitination. Substrate recognition component of a SCF (SKP1-CUL1-F-box protein) E3 ubiquitin-protein ligase complex which mediates the ubiquitination and subsequent proteasomal degradation of target proteins. Probably recognizes and binds to phosphorylated target proteins. Recognizes FZO1 and regulates the amount of FZO1. Regulatory factor for the mitochondrial fusion machinery. Required for mitochondrial DNA maintenance. This Saccharomyces cerevisiae (strain ATCC 204508 / S288c) (Baker's yeast) protein is Mitochondrial distribution and morphology protein 30 (MDM30).